A 78-amino-acid chain; its full sequence is Short neurotoxin OH-46 (78 aa).

The N-terminal stretch at 1–21 is a signal peptide; that stretch reads MKNLLLTFLVVTIVCLDLGYT. Cystine bridges form between C24-C40, C33-C58, C62-C70, and C71-C76.

It belongs to the three-finger toxin family. Short-chain subfamily. Expressed by the venom gland.

It localises to the secreted. In terms of biological role, this three-finger toxin binds and inhibits the nicotinic acetylcholine receptor (nAChR). The polypeptide is Short neurotoxin OH-46 (Ophiophagus hannah (King cobra)).